The following is a 136-amino-acid chain: 14 kDa fusion protein (136 aa).

The disordered stretch occupies residues glutamate 22–alanine 50. The segment covering tryptophan 24–alanine 38 has biased composition (polar residues). Residue asparagine 86 is glycosylated (N-linked (GlcNAc...) asparagine; by host).

Belongs to the poxviruses fusion protein family. In terms of assembly, homotrimer, covalently linked.

It localises to the virion membrane. This protein appears to play an important role in virus penetration at the level of cell fusion. The N-terminal proximal region is essential for fusion ability. Essential in fusing the outermost of the two Golgi-derived membranes enveloping the virus with the plasma membrane, and in its subsequent release extracellularly. The sequence is that of 14 kDa fusion protein from Vaccinia virus (strain WR 65-16) (VACV).